Reading from the N-terminus, the 153-residue chain is Calmodulin-like protein 4 (153 aa).

4 EF-hand domains span residues 8–43 (DQIN…LGAS), 44–79 (PTPG…QIKQ), 81–116 (DPKK…LGEK), and 117–152 (LTHK…PVRD).

This sequence belongs to the calmodulin family. Interacts with MYO7B; the interaction mediates the association of CALML4 with the IMAC/intermicrovillar adhesion complex. Interacts with MYO7A.

It is found in the cell projection. The protein resides in the microvillus. As part of the intermicrovillar adhesion complex/IMAC plays a role in epithelial brush border differentiation, controlling microvilli organization and length. Acts as a light chain for MYO7B and is required for efficient targeting of the IMAC to the tips of border brush microvilli. The chain is Calmodulin-like protein 4 (CALML4) from Bos taurus (Bovine).